The following is a 98-amino-acid chain: NADH-ubiquinone oxidoreductase chain 4L (98 aa).

3 consecutive transmembrane segments (helical) span residues 1–21 (MSMV…GLLI), 30–50 (LLCL…TILI), and 61–81 (IILL…LVMI).

Belongs to the complex I subunit 4L family. Core subunit of respiratory chain NADH dehydrogenase (Complex I) which is composed of 45 different subunits.

It localises to the mitochondrion inner membrane. The enzyme catalyses a ubiquinone + NADH + 5 H(+)(in) = a ubiquinol + NAD(+) + 4 H(+)(out). Core subunit of the mitochondrial membrane respiratory chain NADH dehydrogenase (Complex I) which catalyzes electron transfer from NADH through the respiratory chain, using ubiquinone as an electron acceptor. Part of the enzyme membrane arm which is embedded in the lipid bilayer and involved in proton translocation. In Neovison vison (American mink), this protein is NADH-ubiquinone oxidoreductase chain 4L (MT-ND4L).